A 305-amino-acid polypeptide reads, in one-letter code: Heme A synthase (305 aa).

At 1-6 (MKKFLK) the chain is on the cytoplasmic side. The chain crosses the membrane as a helical span at residues 7 to 27 (VWSVLTIICMTVVVFGGALVT). Topologically, residues 28 to 63 (KTGSADGCGNSWPLCNGQLVRLTDVTPEKLIEFMHR) are extracellular. The cysteines at positions 35 and 42 are disulfide-linked. Glu-59 is a catalytic residue. His-62 contributes to the heme o binding site. A helical membrane pass occupies residues 64 to 84 (MTTGISSIFVIVLAICAWIYM). Over 85–92 (KNRRETKP) the chain is Cytoplasmic. A helical transmembrane segment spans residues 93 to 113 (LAIIAVLFLIIQALMGMAAVV). The Extracellular segment spans residues 114–122 (WGQNPYIMA). A helical membrane pass occupies residues 123-143 (LHFGISIICYASIVLLALMIF). A heme o-binding site is contributed by His-124. The Cytoplasmic segment spans residues 144–160 (EVDRKFDARNLVMGTKL). Residues 161–181 (RVNIYALTIYTYLAVYTGALV) traverse the membrane as a helical segment. The Extracellular segment spans residues 182 to 212 (RHEKASMAVPVWPFENGHFIMPTSVQDYVQY). A helical membrane pass occupies residues 213 to 233 (FHRLAAFILIVWLLYVTWLVF). His-214 lines the heme b pocket. Residues 234 to 240 (RDYRRYR) are Cytoplasmic-facing. Residues 241-261 (VLTFSMVLSLVFIALQAVTGA) form a helical membrane-spanning segment. Over 262–271 (LSVYTGVNLY) the chain is Extracellular. A helical transmembrane segment spans residues 272 to 292 (IALAHSLIITMLFALLCYLCL). His-276 is a binding site for heme b. At 293-305 (LASRSKSNRLRIK) the chain is on the cytoplasmic side.

This sequence belongs to the COX15/CtaA family. Type 1 subfamily. Interacts with CtaB. Heme b is required as a cofactor.

Its subcellular location is the cell membrane. The catalysed reaction is Fe(II)-heme o + 2 A + H2O = Fe(II)-heme a + 2 AH2. The protein operates within porphyrin-containing compound metabolism; heme A biosynthesis; heme A from heme O: step 1/1. Its function is as follows. Catalyzes the conversion of heme O to heme A by two successive hydroxylations of the methyl group at C8. The first hydroxylation forms heme I, the second hydroxylation results in an unstable dihydroxymethyl group, which spontaneously dehydrates, resulting in the formyl group of heme A. The chain is Heme A synthase from Listeria monocytogenes serovar 1/2a (strain ATCC BAA-679 / EGD-e).